Consider the following 327-residue polypeptide: GMP reductase (327 aa).

The active-site Thioimidate intermediate is Cys-175. NADP(+) is bound at residue 204-227 (IIADGGIRTPGDIAKSIRFGATMV).

It belongs to the IMPDH/GMPR family. GuaC type 2 subfamily.

It carries out the reaction IMP + NH4(+) + NADP(+) = GMP + NADPH + 2 H(+). Functionally, catalyzes the irreversible NADPH-dependent deamination of GMP to IMP. It functions in the conversion of nucleobase, nucleoside and nucleotide derivatives of G to A nucleotides, and in maintaining the intracellular balance of A and G nucleotides. This chain is GMP reductase, found in Clostridium acetobutylicum (strain ATCC 824 / DSM 792 / JCM 1419 / IAM 19013 / LMG 5710 / NBRC 13948 / NRRL B-527 / VKM B-1787 / 2291 / W).